The chain runs to 1053 residues: Translation initiation factor IF-2 (1053 aa).

The span at 1-20 shows a compositional bias: polar residues; sequence MSESKNSGENTLSVTPTKTL. The interval 1 to 442 is disordered; it reads MSESKNSGEN…TATGGEEEER (442 aa). Low complexity-rich tracts occupy residues 64-76 and 83-102; these read EAAP…ATVT and RPAA…AAVP. Pro residues-rich tracts occupy residues 131 to 141 and 150 to 161; these read PAQPKAEPVPA and APVPPVPAPSAP. The segment covering 178 to 220 has biased composition (low complexity); the sequence is PVSQAKPIQTAPVQTAPAAQASASQTTGPRPVAAGPRPATGAA. The segment covering 255 to 264 has biased composition (gly residues); the sequence is GGRGGPGRGE. Basic and acidic residues-rich tracts occupy residues 279–288 and 295–353; these read LTDEEREARA and RIRE…EAKR. The segment covering 375-386 has biased composition (low complexity); it reads TATAAAPAAAAP. A tr-type G domain is found at 550-720; it reads PRPPVVTIMG…ALQAELLDLK (171 aa). The segment at 559 to 566 is G1; sequence GHVDHGKT. GTP is bound at residue 559–566; that stretch reads GHVDHGKT. The G2 stretch occupies residues 584–588; that stretch reads GITQH. The tract at residues 606–609 is G3; the sequence is DTPG. Residues 606-610 and 660-663 each bind GTP; these read DTPGH and NKID. The interval 660–663 is G4; it reads NKID. Residues 696–698 are G5; that stretch reads SAT.

It belongs to the TRAFAC class translation factor GTPase superfamily. Classic translation factor GTPase family. IF-2 subfamily.

It localises to the cytoplasm. In terms of biological role, one of the essential components for the initiation of protein synthesis. Protects formylmethionyl-tRNA from spontaneous hydrolysis and promotes its binding to the 30S ribosomal subunits. Also involved in the hydrolysis of GTP during the formation of the 70S ribosomal complex. This chain is Translation initiation factor IF-2, found in Beijerinckia indica subsp. indica (strain ATCC 9039 / DSM 1715 / NCIMB 8712).